A 362-amino-acid polypeptide reads, in one-letter code: Talin rod domain-containing protein 1 (362 aa).

The segment at 1–26 (MASGSAGKPTGEAASPAPASAIGGAS) is disordered. Ala-2 bears the N-acetylalanine mark. The span at 13–26 (AASPAPASAIGGAS) shows a compositional bias: low complexity.

As to quaternary structure, may homodimerize. Interacts with F-actin.

Actin-binding protein which may have an oncogenic function and regulates cell proliferation, migration and invasion in cancer cells. The polypeptide is Talin rod domain-containing protein 1 (Homo sapiens (Human)).